Here is a 270-residue protein sequence, read N- to C-terminus: Putative phosphoenolpyruvate synthase regulatory protein (270 aa).

150–157 (GVSRCGKT) lines the ADP pocket.

The protein belongs to the pyruvate, phosphate/water dikinase regulatory protein family. PSRP subfamily.

The enzyme catalyses [pyruvate, water dikinase] + ADP = [pyruvate, water dikinase]-phosphate + AMP + H(+). The catalysed reaction is [pyruvate, water dikinase]-phosphate + phosphate + H(+) = [pyruvate, water dikinase] + diphosphate. Bifunctional serine/threonine kinase and phosphorylase involved in the regulation of the phosphoenolpyruvate synthase (PEPS) by catalyzing its phosphorylation/dephosphorylation. This Shewanella denitrificans (strain OS217 / ATCC BAA-1090 / DSM 15013) protein is Putative phosphoenolpyruvate synthase regulatory protein.